A 127-amino-acid polypeptide reads, in one-letter code: Classical arabinogalactan protein 10 (127 aa).

An N-terminal signal peptide occupies residues 1–21 (MASKSVVVLLFLALIASSAIA). Position 22 is a pyrrolidone carboxylic acid (glutamine 22). The disordered stretch occupies residues 22 to 107 (QAPGPAPTRS…TGSTPVDNNN (86 aa)). 5 positions are modified to 4-hydroxyproline: proline 24, proline 26, proline 28, proline 32, and proline 36. 5 O-linked (Ara...) hydroxyproline glycosylation sites follow: proline 24, proline 26, proline 28, proline 32, and proline 36. 3 stretches are compositionally biased toward pro residues: residues 25–39 (GPAP…PAQP), 48–58 (SITPTPTPTPS), and 66–86 (VSPP…PPTS). A compositionally biased stretch (polar residues) spans 98–107 (TGSTPVDNNN). The GPI-anchor amidated asparagine moiety is linked to residue asparagine 107. Positions 108–127 (AATLAAGSLAGFVFVASLLL) are cleaved as a propeptide — removed in mature form.

Belongs to the classical AGP family. Post-translationally, O-glycosylated on hydroxyprolines; noncontiguous hydroxylproline residues are glycosylated with arabinogalactan. In terms of tissue distribution, predominantly expressed in flowers and at a lower level in roots and siliques.

Its subcellular location is the cell membrane. Its function is as follows. Proteoglycan that seems to be implicated in diverse developmental roles such as differentiation, cell-cell recognition, embryogenesis and programmed cell death. The chain is Classical arabinogalactan protein 10 (AGP10) from Arabidopsis thaliana (Mouse-ear cress).